Consider the following 632-residue polypeptide: MNSQKASKMTGSLKKNDLYIFDLSEQLLNSLKLMSFDSTLREVEVEKTSDNDRNKESGDLQIARKKVTSNVMRCSVCQMSFDSRNEQKAHYQTDYHLMNVKRNLRGLDILSVEEFDALISKEHGIKSEDENSGGEQTSSDHEESEEASDRDPDLQTNNYMETIIENDLQKLGFQKDESDAISHINTQSPYIYFKSKYLQKNEVLAIYKSLFNKRSLSNPNEALTFWNSQENPMAISALFMVGGGHFAGAIVSHQRLNVKGNAHKKDETLIEQAVNFLEHKTFHRYTTRRKQGGSQSAMDNAKGKANSAGSALRRYNESALKTDIQGVLKDWEPYLSKCDNIFIRARNVSDKKIFTDNTVLNKGDERIKSFPFTTNRPTVLELKKAWCELSYLKILPKPEPLAVKETVQKLEVSNKKDEFKEKQEPLLEEIQTEEIISLLKKGRAPLLISFLKKNKLDGNFRLKPESKYSLTPTMLHYASQQGMKQMALILLSNIKCDPTIKNRLGRTAWDLNRNDDVRHAFQIARYNLGESFTNWDETHIGQPLSREQVDEINEKKKAIENEKAEKLIKLELEAAKEKQRFAKDAERGPGKKLTNIPSIQQQNLNSLTDEQRRRLMREQRARAAEERMKKKY.

The segment at 72 to 96 (MRCSVCQMSFDSRNEQKAHYQTDYH) adopts a C2H2-type zinc-finger fold. A disordered region spans residues 123–155 (HGIKSEDENSGGEQTSSDHEESEEASDRDPDLQ). In terms of domain architecture, VLRF1 spans 232–392 (PMAISALFMV…KKAWCELSYL (161 aa)). Residue glutamine 295 is part of the active site. ANK repeat units follow at residues 470–500 (LTPT…DPTI) and 504–530 (LGRT…NLGE). Coiled-coil stretches lie at residues 544-582 (LSRE…QRFA) and 608-632 (TDEQ…KKKY). Residues 578-589 (KQRFAKDAERGP) show a composition bias toward basic and acidic residues. The disordered stretch occupies residues 578-632 (KQRFAKDAERGPGKKLTNIPSIQQQNLNSLTDEQRRRLMREQRARAAEERMKKKY). The segment covering 595–608 (NIPSIQQQNLNSLT) has biased composition (polar residues). Residues 609-632 (DEQRRRLMREQRARAAEERMKKKY) show a composition bias toward basic and acidic residues.

The protein belongs to the ANKZF1/VMS1 family. Associates with 60S ribosomal subunit. Interacts with CDC48. Interacts with NPL4.

The protein localises to the cytoplasm. It localises to the mitochondrion. The protein resides in the endoplasmic reticulum membrane. Functionally, endonuclease that cleaves polypeptidyl-tRNAs downstream of the ribosome-associated quality control (RQC) pathway to release incompletely synthesized polypeptides for degradation. The RQC pathway disassembles aberrantly stalled translation complexes to recycle or degrade the constituent parts. VMS1 acts downstream disassembly of stalled ribosomes and specifically cleaves off the terminal 3'-CCA nucleotides universal to all tRNAs from polypeptidyl-tRNAs, releasing (1) ubiquitinated polypeptides from 60S ribosomal subunit for degradation by the ERAD pathway and (2) cleaved tRNAs for recycling. Component of an evolutionarily conserved system for ubiquitin-mediated mitochondria-associated protein degradation (MAD), which is necessary to maintain mitochondrial, cellular, and organismal viability. The protein is tRNA endonuclease VMS1 of Saccharomyces cerevisiae (strain ATCC 204508 / S288c) (Baker's yeast).